The chain runs to 270 residues: NAD kinase (270 aa).

The active-site Proton acceptor is the Asp61. NAD(+)-binding positions include 61 to 62 (DG), 133 to 134 (NE), Arg144, Arg163, Asp165, and 176 to 181 (TAYNLS).

This sequence belongs to the NAD kinase family. It depends on a divalent metal cation as a cofactor.

The protein resides in the cytoplasm. It carries out the reaction NAD(+) + ATP = ADP + NADP(+) + H(+). In terms of biological role, involved in the regulation of the intracellular balance of NAD and NADP, and is a key enzyme in the biosynthesis of NADP. Catalyzes specifically the phosphorylation on 2'-hydroxyl of the adenosine moiety of NAD to yield NADP. This Natronomonas pharaonis (strain ATCC 35678 / DSM 2160 / CIP 103997 / JCM 8858 / NBRC 14720 / NCIMB 2260 / Gabara) (Halobacterium pharaonis) protein is NAD kinase.